Reading from the N-terminus, the 270-residue chain is Diaminopimelate epimerase (270 aa).

The substrate site is built by Asn15, Gln49, and Asn66. The Proton donor role is filled by Cys75. Substrate-binding positions include Gly76–Asn77, Asn155, Asn187, and Glu204–Arg205. Residue Cys213 is the Proton acceptor of the active site. Gly214–Ser215 provides a ligand contact to substrate.

It belongs to the diaminopimelate epimerase family. In terms of assembly, homodimer.

It is found in the cytoplasm. The catalysed reaction is (2S,6S)-2,6-diaminopimelate = meso-2,6-diaminopimelate. It participates in amino-acid biosynthesis; L-lysine biosynthesis via DAP pathway; DL-2,6-diaminopimelate from LL-2,6-diaminopimelate: step 1/1. Catalyzes the stereoinversion of LL-2,6-diaminopimelate (L,L-DAP) to meso-diaminopimelate (meso-DAP), a precursor of L-lysine and an essential component of the bacterial peptidoglycan. The chain is Diaminopimelate epimerase from Rickettsia akari (strain Hartford).